The following is a 396-amino-acid chain: Digeranylgeranylglycerophospholipid reductase 2 (396 aa).

FAD contacts are provided by alanine 13, glutamate 32, cysteine 43, alanine 44, glycine 46, arginine 92, alanine 116, aspartate 278, glycine 290, and leucine 291.

It belongs to the geranylgeranyl reductase family. DGGGPL reductase subfamily. FAD is required as a cofactor.

The enzyme catalyses a 2,3-bis-O-phytanyl-sn-glycerol 1-phospholipid + 8 A = a 2,3-bis-O-(geranylgeranyl)-sn-glycerol 1-phospholipid + 8 AH2. It catalyses the reaction 2,3-bis-O-(phytanyl)-sn-glycerol 1-phosphate + 8 A = 2,3-bis-O-(geranylgeranyl)-sn-glycerol 1-phosphate + 8 AH2. It carries out the reaction CDP-2,3-bis-O-(geranylgeranyl)-sn-glycerol + 8 AH2 = CDP-2,3-bis-O-(phytanyl)-sn-glycerol + 8 A. The catalysed reaction is archaetidylserine + 8 AH2 = 2,3-bis-O-phytanyl-sn-glycero-3-phospho-L-serine + 8 A. Its pathway is membrane lipid metabolism; glycerophospholipid metabolism. In terms of biological role, is involved in the reduction of 2,3-digeranylgeranylglycerophospholipids (unsaturated archaeols) into 2,3-diphytanylglycerophospholipids (saturated archaeols) in the biosynthesis of archaeal membrane lipids. Catalyzes the formation of archaetidic acid (2,3-di-O-phytanyl-sn-glyceryl phosphate) from 2,3-di-O-geranylgeranylglyceryl phosphate (DGGGP) via the hydrogenation of each double bond of the isoprenoid chains. Is also probably able to reduce double bonds of geranyl groups in CDP-2,3-bis-O-(geranylgeranyl)-sn-glycerol and archaetidylserine, thus acting at various stages in the biosynthesis of archaeal membrane lipids. This Methanopyrus kandleri (strain AV19 / DSM 6324 / JCM 9639 / NBRC 100938) protein is Digeranylgeranylglycerophospholipid reductase 2.